A 307-amino-acid polypeptide reads, in one-letter code: Ribonuclease HII (307 aa).

One can recognise an RNase H type-2 domain in the interval 44–235 (EPVAGVDEAG…VRRAGGRMEL (192 aa)). A divalent metal cation contacts are provided by D50, E51, and D144. Residues 241–307 (ADSDDSPGFA…SRPAELLEIP (67 aa)) are disordered. A compositionally biased stretch (low complexity) spans 250 to 280 (ASGPAEAVPGPAGSAGAASAAARPAAAGPAG). Residues 287–296 (RAADLRDNGD) are compositionally biased toward basic and acidic residues.

Belongs to the RNase HII family. Requires Mn(2+) as cofactor. Mg(2+) is required as a cofactor.

The protein resides in the cytoplasm. The catalysed reaction is Endonucleolytic cleavage to 5'-phosphomonoester.. Its function is as follows. Endonuclease that specifically degrades the RNA of RNA-DNA hybrids. In Acidothermus cellulolyticus (strain ATCC 43068 / DSM 8971 / 11B), this protein is Ribonuclease HII.